Consider the following 63-residue polypeptide: Large ribosomal subunit protein bL28 (63 aa).

It belongs to the bacterial ribosomal protein bL28 family.

The sequence is that of Large ribosomal subunit protein bL28 from Alkaliphilus metalliredigens (strain QYMF).